Here is a 156-residue protein sequence, read N- to C-terminus: Low-salt glycan biosynthesis protein Agl8 (156 aa).

Residues 14 to 15 and Arg47 contribute to the substrate site; that span reads RI. The region spanning 25–156 is the Nudix hydrolase domain; sequence ANVPLVSVDL…YVERYLDALD (132 aa). Mg(2+) is bound by residues Gly60, Glu80, and Gln130. The Nudix box motif lies at 61 to 82; it reads GTVFKNETLTDALYRVADEELG.

Belongs to the Nudix hydrolase family. Mg(2+) is required as a cofactor.

The protein operates within protein modification; protein glycosylation. Its pathway is cell surface structure biogenesis; S-layer biogenesis. Functionally, nudix hydrolase involved in N-glycan biosynthetic pathway that takes place under low-salt conditions (1.75 M instead of 3.4 M). Participates in the formation of the tetrasaccharide present at 'Asn-532' of S-layer glycoprotein Csg, consisting of a sulfated hexose, 2 hexoses and rhamnose. Mediates attachment of sugar 3 in the tetrasaccharide. This chain is Low-salt glycan biosynthesis protein Agl8 (agl8), found in Haloferax volcanii (strain ATCC 29605 / DSM 3757 / JCM 8879 / NBRC 14742 / NCIMB 2012 / VKM B-1768 / DS2) (Halobacterium volcanii).